We begin with the raw amino-acid sequence, 369 residues long: Histidinol-phosphate aminotransferase (369 aa).

Lys-223 is subject to N6-(pyridoxal phosphate)lysine.

This sequence belongs to the class-II pyridoxal-phosphate-dependent aminotransferase family. Histidinol-phosphate aminotransferase subfamily. Homodimer. It depends on pyridoxal 5'-phosphate as a cofactor.

It catalyses the reaction L-histidinol phosphate + 2-oxoglutarate = 3-(imidazol-4-yl)-2-oxopropyl phosphate + L-glutamate. It functions in the pathway amino-acid biosynthesis; L-histidine biosynthesis; L-histidine from 5-phospho-alpha-D-ribose 1-diphosphate: step 7/9. This is Histidinol-phosphate aminotransferase from Shouchella clausii (strain KSM-K16) (Alkalihalobacillus clausii).